Reading from the N-terminus, the 693-residue chain is DNA ligase (693 aa).

NAD(+) is bound by residues 43–47 (DEEYD), 92–93 (SL), and glutamate 123. The active-site N6-AMP-lysine intermediate is lysine 125. Arginine 146, glutamate 180, lysine 296, and lysine 320 together coordinate NAD(+). Residues cysteine 414, cysteine 417, cysteine 433, and cysteine 438 each coordinate Zn(2+). The 90-residue stretch at 595–684 (VKYDVLKGLT…AKLKGYNFDE (90 aa)) folds into the BRCT domain.

Belongs to the NAD-dependent DNA ligase family. LigA subfamily. Mg(2+) serves as cofactor. Mn(2+) is required as a cofactor.

The catalysed reaction is NAD(+) + (deoxyribonucleotide)n-3'-hydroxyl + 5'-phospho-(deoxyribonucleotide)m = (deoxyribonucleotide)n+m + AMP + beta-nicotinamide D-nucleotide.. Functionally, DNA ligase that catalyzes the formation of phosphodiester linkages between 5'-phosphoryl and 3'-hydroxyl groups in double-stranded DNA using NAD as a coenzyme and as the energy source for the reaction. It is essential for DNA replication and repair of damaged DNA. The sequence is that of DNA ligase from Thermotoga neapolitana (strain ATCC 49049 / DSM 4359 / NBRC 107923 / NS-E).